A 375-amino-acid chain; its full sequence is Queuine tRNA-ribosyltransferase (375 aa).

Asp-90 acts as the Proton acceptor in catalysis. Substrate is bound by residues 90-94 (DSGGF), Asp-144, Gln-190, and Gly-217. An RNA binding region spans residues 248–254 (GIGTPHY). Asp-267 serves as the catalytic Nucleophile. Positions 272 to 276 (TRIAR) are RNA binding; important for wobble base 34 recognition. Zn(2+) is bound by residues Cys-305, Cys-307, Cys-310, and His-336.

Belongs to the queuine tRNA-ribosyltransferase family. In terms of assembly, homodimer. Within each dimer, one monomer is responsible for RNA recognition and catalysis, while the other monomer binds to the replacement base PreQ1. Requires Zn(2+) as cofactor.

It carries out the reaction 7-aminomethyl-7-carbaguanine + guanosine(34) in tRNA = 7-aminomethyl-7-carbaguanosine(34) in tRNA + guanine. It functions in the pathway tRNA modification; tRNA-queuosine biosynthesis. Catalyzes the base-exchange of a guanine (G) residue with the queuine precursor 7-aminomethyl-7-deazaguanine (PreQ1) at position 34 (anticodon wobble position) in tRNAs with GU(N) anticodons (tRNA-Asp, -Asn, -His and -Tyr). Catalysis occurs through a double-displacement mechanism. The nucleophile active site attacks the C1' of nucleotide 34 to detach the guanine base from the RNA, forming a covalent enzyme-RNA intermediate. The proton acceptor active site deprotonates the incoming PreQ1, allowing a nucleophilic attack on the C1' of the ribose to form the product. After dissociation, two additional enzymatic reactions on the tRNA convert PreQ1 to queuine (Q), resulting in the hypermodified nucleoside queuosine (7-(((4,5-cis-dihydroxy-2-cyclopenten-1-yl)amino)methyl)-7-deazaguanosine). This chain is Queuine tRNA-ribosyltransferase, found in Borrelia recurrentis (strain A1).